The primary structure comprises 387 residues: Methyltransferase phomM (387 aa).

Positions 98-223 (PHRPKDLHIL…QSVADLFTTL (126 aa)) are methyltransferase domain.

The protein belongs to the class I-like SAM-binding methyltransferase superfamily. Erg6/SMT family.

The protein operates within mycotoxin biosynthesis. Methyltransferase; part of the gene cluster that mediates the biosynthesis of the phomopsins, a group of hexapeptide mycotoxins which infects lupins and causes lupinosis disease in livestock. Within the pathway, phomM acts as an S-adenosylmethionine-dependent alpha-N-methyltransferase that catalyzes two successive N-methylation reactions, converting N-desmethyl-phomopsin A to phomopsin A and phomopsin A further to an N,N-dimethylated congener called phomopsin E. The pathway starts with the processing of the precursor phomA by several endopeptidases including kexin proteases as well as the cluster-specific S41 family peptidase phomP1 and the oligopeptidase phomG to produce 10 identical copies of the hexapeptide Tyr-Val-Ile-Pro-Ile-Asp. After being excised from the precursor peptide, the core peptides are cyclized and modified post-translationally by enzymes encoded within the gene cluster. The timing and order of proteolysis of the phomA precursor and PTMs are still unknown. Two tyrosinase-like enzymes, phomQ1 and phomQ2, catalyze the chlorination and hydroxylation of Tyr, respectively. PhomYb, is proposed to be involved in the construction of the macrocyclic structure. The other 4 ustYa family proteins may be involved in PTMs that generate the unique structure of phomopsin A. PhomYa is required for the hydroxylation of C-beta of Tyr. PhomYc, phomYd, and phomYe are responsible for the biosynthesis of 2,3-dehydroisoleucine (dIle), 2,3-dehydroaspartic acid (dAsp), and 3,4-dehydroproline (dPro), respectively. While dIle formation by phomYc is indispensable for the installation of dAsp by phomYd, the order of the other PTMs have not been elucidated yet. Most of the biosynthetic enzymes likely have broad substrate specificity, and thus, there might be a metabolic grid from a precursor to phomopsin A. The enzyme(s) responsible for the biosynthesis of 3,4-dehydrovaline (dVal) have also not been identified yet. Finally, phomM acts as an S-adenosylmethionine-dependent alpha-N-methyltransferase that catalyzes two successive N-methylation reactions, converting N-desmethyl-phomopsin A to phomopsin A and phomopsin A further to an N,N-dimethylated congener called phomopsin E. The protein is Methyltransferase phomM of Diaporthe leptostromiformis (Lupinosis disease fungus).